Consider the following 367-residue polypeptide: NAD(P)H-quinone oxidoreductase subunit 1, chloroplastic (367 aa).

Transmembrane regions (helical) follow at residues 29–49, 96–116, 128–148, 176–196, 204–224, 266–286, 304–324, and 347–367; these read WIPLPILLLIILAVVGVLVVV, VLLFTLGPAIVVIPIFLSYLI, INLGIFFWITVSSVAPLGLLM, LALCVLSICLLSDSLSTIDIV, ILGWNIWRQPIGFIAFIIAAL, LVSALFASVLYLGGWSLPIPI, VISAFLGIGMTLLKTYLFLFL, and FLLPISLGNLLLTASLKIALL.

The protein belongs to the complex I subunit 1 family. In terms of assembly, NDH is composed of at least 16 different subunits, 5 of which are encoded in the nucleus.

The protein localises to the plastid. It is found in the chloroplast thylakoid membrane. The catalysed reaction is a plastoquinone + NADH + (n+1) H(+)(in) = a plastoquinol + NAD(+) + n H(+)(out). It catalyses the reaction a plastoquinone + NADPH + (n+1) H(+)(in) = a plastoquinol + NADP(+) + n H(+)(out). Functionally, NDH shuttles electrons from NAD(P)H:plastoquinone, via FMN and iron-sulfur (Fe-S) centers, to quinones in the photosynthetic chain and possibly in a chloroplast respiratory chain. The immediate electron acceptor for the enzyme in this species is believed to be plastoquinone. Couples the redox reaction to proton translocation, and thus conserves the redox energy in a proton gradient. In Mesostigma viride (Green alga), this protein is NAD(P)H-quinone oxidoreductase subunit 1, chloroplastic.